Consider the following 288-residue polypeptide: Phosphatidylglycerol--prolipoprotein diacylglyceryl transferase (288 aa).

The next 4 membrane-spanning stretches (helical) occupy residues 18-38 (WSLRLTWYGVFFTVGIFLACL), 68-88 (FFIYSILFIVPGARLAYVIFY), 107-127 (GLSSHGGVLGFLLWAAIFSWI), and 135-155 (LTFLFLTDLCGSVFGIAAFFI). Arg-156 contributes to the a 1,2-diacyl-sn-glycero-3-phospho-(1'-sn-glycerol) binding site. The next 3 helical transmembrane spans lie at 193–213 (VQLYEGISYLVVSGILYFLSY), 222–242 (GYVTSIACISVAFIRFFAEYV), and 256–276 (LTIGQILSIPLFLFGVALLII).

The protein belongs to the Lgt family.

The protein localises to the cell inner membrane. It catalyses the reaction L-cysteinyl-[prolipoprotein] + a 1,2-diacyl-sn-glycero-3-phospho-(1'-sn-glycerol) = an S-1,2-diacyl-sn-glyceryl-L-cysteinyl-[prolipoprotein] + sn-glycerol 1-phosphate + H(+). Its pathway is protein modification; lipoprotein biosynthesis (diacylglyceryl transfer). Functionally, catalyzes the transfer of the diacylglyceryl group from phosphatidylglycerol to the sulfhydryl group of the N-terminal cysteine of a prolipoprotein, the first step in the formation of mature lipoproteins. This Chlamydia pneumoniae (Chlamydophila pneumoniae) protein is Phosphatidylglycerol--prolipoprotein diacylglyceryl transferase.